We begin with the raw amino-acid sequence, 190 residues long: Putative manganese efflux pump MntP (190 aa).

Helical transmembrane passes span 3 to 23 (PASIIFLAFAMSTDAFAAAVG), 39 to 59 (IGLIFGVIEAITPVVGWFIGQ), 65 to 85 (VANWDHWIAFSLLLLLGLHMI), 106 to 128 (WLLAVTGLATSIDALAVGVGLAF), 133 to 155 (IWVAASAIGLATMTMVTLGVMLG), and 157 to 177 (AIGTVMGQRAEVLGGVVLIIV).

The protein belongs to the MntP (TC 9.B.29) family.

The protein localises to the cell inner membrane. Probably functions as a manganese efflux pump. The sequence is that of Putative manganese efflux pump MntP from Pseudomonas fluorescens (strain ATCC BAA-477 / NRRL B-23932 / Pf-5).